The following is a 248-amino-acid chain: ATP synthase delta chain, chloroplastic (248 aa).

The N-terminal 60 residues, 1–60 (MAALQQTPITFQSRSPPPTQIISGPTAKLSFSGGLKLPKLTIKLRSNRTSRRGGGAAGSK), are a transit peptide targeting the chloroplast.

This sequence belongs to the ATPase delta chain family. As to quaternary structure, F-type ATPases have 2 components, CF(1) - the catalytic core - and CF(0) - the membrane proton channel. CF(1) has five subunits: alpha(3), beta(3), gamma(1), delta(1), epsilon(1). CF(0) has three main subunits: a, b and c.

The protein localises to the plastid. It is found in the chloroplast thylakoid membrane. This protein seems to be part of the stalk that links CF(0) to CF(1). It either transmits conformational changes from CF(0) into CF(1) or is implicated in proton conduction. This is ATP synthase delta chain, chloroplastic (ATPD) from Nicotiana tabacum (Common tobacco).